Here is a 130-residue protein sequence, read N- to C-terminus: UPF0251 protein MmarC6_0272 (130 aa).

The protein belongs to the UPF0251 family.

The chain is UPF0251 protein MmarC6_0272 from Methanococcus maripaludis (strain C6 / ATCC BAA-1332).